The chain runs to 293 residues: Phycoerythrin class 2 subunit gamma, linker polypeptide (293 aa).

Cys-49 is a binding site for phycourobilin. Residues 50–229 enclose the PBS-linker domain; it reads AAMGIGIGPR…LGGMKVAISD (180 aa).

Contains one covalently linked phycourobilin chromophore.

It localises to the cellular thylakoid membrane. Functionally, this protein is a bile pigment-bearing rod linker polypeptide that associates with C-phycoerythrin. The protein is Phycoerythrin class 2 subunit gamma, linker polypeptide (mpeC) of Synechococcus sp. (strain WH8020).